The primary structure comprises 346 residues: Thioredoxin domain-containing protein R362 (346 aa).

The Thioredoxin domain maps to 212-345 (LTNLSNTEAN…IVKFIDETMS (134 aa)).

Its subcellular location is the virion. The protein is Thioredoxin domain-containing protein R362 of Acanthamoeba polyphaga (Amoeba).